The chain runs to 794 residues: Alpha-1,3-galactosidase B (794 aa).

Residues 1–57 (MEGNLSFSLMEASGRSIFFLIEGIREQSIKNMFSRMFSWSFVVAACLAGLFPAQSQG) form the signal peptide. 5 PbH1 repeats span residues 468–499 (SEDF…HFSN), 609–631 (YPSV…LFTT), 632–654 (PERV…LLAG), 665–686 (CHEV…YQFT), and 707–728 (HRNV…LFAI).

Belongs to the glycosyl hydrolase 110 family. B subfamily.

It catalyses the reaction Hydrolysis of terminal, non-reducing branched (1-&gt;3)-alpha-D-galactosidic residues, producing free D-galactose.. The enzyme catalyses Hydrolysis of terminal, non-reducing linear (1-&gt;3)-alpha-D-galactosidic residues, producing free D-galactose.. It carries out the reaction Hydrolysis of terminal, non-reducing alpha-D-galactose residues in alpha-D-galactosides, including galactose oligosaccharides, galactomannans and galactolipids.. In terms of biological role, alpha-galactosidase. Removes both branched alpha-1,3-linked galactose residues of blood group B antigens and linear alpha-1,3-linked galactose structures. In Akkermansia muciniphila (strain ATCC BAA-835 / DSM 22959 / JCM 33894 / BCRC 81048 / CCUG 64013 / CIP 107961 / Muc), this protein is Alpha-1,3-galactosidase B (glaB).